Reading from the N-terminus, the 129-residue chain is M-zodatoxin-Lt8e (129 aa).

The N-terminal stretch at 1-20 (MKYFVVALALVAAFVCIAES) is a signal peptide. Residues 21-60 (KPAESEHELAEVEEENELADLEDAVWLEHLADLSDLEEAR) constitute a propeptide that is removed on maturation. Residues 57–60 (EEAR) carry the Processing quadruplet motif motif.

Post-translationally, cleavage of the propeptide depends on the processing quadruplet motif (XXXR, with at least one of X being E). As to expression, expressed by the venom gland.

The protein localises to the secreted. Its function is as follows. Insecticidal, cytolytic and antimicrobial peptide. Forms voltage-dependent, ion-permeable channels in membranes. At high concentration causes cell membrane lysis. This Lachesana tarabaevi (Spider) protein is M-zodatoxin-Lt8e (cit 1-5).